Reading from the N-terminus, the 491-residue chain is Cytosolic Fe-S cluster assembly factor NAR1 (491 aa).

Positions 20, 59, 62, 65, 177, 231, 412, and 416 each coordinate [4Fe-4S] cluster.

The protein belongs to the NARF family. As to quaternary structure, interacts with CIA1.

It is found in the cytoplasm. The protein localises to the nucleus. Essential component of a cytosolic Fe/S protein assembly machinery. Required for maturation of extramitochondrial Fe/S proteins. May play a role in the transfer of pre-assembled Fe/S clusters to target apoproteins. This chain is Cytosolic Fe-S cluster assembly factor NAR1 (NAR1), found in Saccharomyces cerevisiae (strain ATCC 204508 / S288c) (Baker's yeast).